Here is a 159-residue protein sequence, read N- to C-terminus: 6,7-dimethyl-8-ribityllumazine synthase (159 aa).

Residues Trp27, 62-64 (SWE), and 86-88 (VLI) contribute to the 5-amino-6-(D-ribitylamino)uracil site. 91 to 92 (ST) contributes to the (2S)-2-hydroxy-3-oxobutyl phosphate binding site. Catalysis depends on His94, which acts as the Proton donor. Leu119 lines the 5-amino-6-(D-ribitylamino)uracil pocket. Position 133 (Arg133) interacts with (2S)-2-hydroxy-3-oxobutyl phosphate.

As to quaternary structure, homopentamer.

It carries out the reaction (2S)-2-hydroxy-3-oxobutyl phosphate + 5-amino-6-(D-ribitylamino)uracil = 6,7-dimethyl-8-(1-D-ribityl)lumazine + phosphate + 2 H2O + H(+). Its pathway is cofactor biosynthesis; riboflavin biosynthesis; riboflavin from 2-hydroxy-3-oxobutyl phosphate and 5-amino-6-(D-ribitylamino)uracil: step 1/2. Its activity is regulated as follows. Competitively inhibited by riboflavin (Ki of 17 uM). Catalyzes the formation of 6,7-dimethyl-8-ribityllumazine by condensation of 5-amino-6-(D-ribitylamino)uracil with 3,4-dihydroxy-2-butanone 4-phosphate. This is the penultimate step in the biosynthesis of riboflavin. Also binds riboflavin with an unexpected high affinity. The polypeptide is 6,7-dimethyl-8-ribityllumazine synthase (rib4) (Schizosaccharomyces pombe (strain 972 / ATCC 24843) (Fission yeast)).